Reading from the N-terminus, the 183-residue chain is uncharacterized protein (183 aa).

An N-terminal signal peptide occupies residues 1–29; that stretch reads MQCWQQPFLRFLQQPFFLATASLAGSSSS. Positions 149 to 183 are disordered; the sequence is PGSTCDGSLKGRAYPSCVPKRDPEHSREESHPLSG. The segment covering 167–183 has biased composition (basic and acidic residues); it reads PKRDPEHSREESHPLSG.

Its subcellular location is the secreted. This is an uncharacterized protein from Homo sapiens (Human).